Here is a 590-residue protein sequence, read N- to C-terminus: Aspartate--tRNA(Asp/Asn) ligase (590 aa).

E176 serves as a coordination point for L-aspartate. An aspartate region spans residues 200–203; that stretch reads QLFK. L-aspartate-binding residues include R222 and H451. 222–224 lines the ATP pocket; sequence RDE. E485 lines the ATP pocket. L-aspartate is bound at residue R492. Position 537–540 (537–540) interacts with ATP; it reads GIDR.

The protein belongs to the class-II aminoacyl-tRNA synthetase family. Type 1 subfamily. Homodimer.

It localises to the cytoplasm. It catalyses the reaction tRNA(Asx) + L-aspartate + ATP = L-aspartyl-tRNA(Asx) + AMP + diphosphate. Its function is as follows. Aspartyl-tRNA synthetase with relaxed tRNA specificity since it is able to aspartylate not only its cognate tRNA(Asp) but also tRNA(Asn). Reaction proceeds in two steps: L-aspartate is first activated by ATP to form Asp-AMP and then transferred to the acceptor end of tRNA(Asp/Asn). This Ehrlichia ruminantium (strain Welgevonden) protein is Aspartate--tRNA(Asp/Asn) ligase.